Reading from the N-terminus, the 130-residue chain is Large ribosomal subunit protein eL32 (130 aa).

S40 bears the Phosphoserine mark.

This sequence belongs to the eukaryotic ribosomal protein eL32 family. In terms of assembly, component of the large ribosomal subunit (LSU). Mature yeast ribosomes consist of a small (40S) and a large (60S) subunit. The 40S small subunit contains 1 molecule of ribosomal RNA (18S rRNA) and 33 different proteins (encoded by 57 genes). The large 60S subunit contains 3 rRNA molecules (25S, 5.8S and 5S rRNA) and 46 different proteins (encoded by 81 genes).

The protein resides in the cytoplasm. Its function is as follows. Component of the ribosome, a large ribonucleoprotein complex responsible for the synthesis of proteins in the cell. The small ribosomal subunit (SSU) binds messenger RNAs (mRNAs) and translates the encoded message by selecting cognate aminoacyl-transfer RNA (tRNA) molecules. The large subunit (LSU) contains the ribosomal catalytic site termed the peptidyl transferase center (PTC), which catalyzes the formation of peptide bonds, thereby polymerizing the amino acids delivered by tRNAs into a polypeptide chain. The nascent polypeptides leave the ribosome through a tunnel in the LSU and interact with protein factors that function in enzymatic processing, targeting, and the membrane insertion of nascent chains at the exit of the ribosomal tunnel. This chain is Large ribosomal subunit protein eL32, found in Saccharomyces cerevisiae (strain ATCC 204508 / S288c) (Baker's yeast).